We begin with the raw amino-acid sequence, 158 residues long: Crossover junction endodeoxyribonuclease RuvC (158 aa).

Catalysis depends on residues D7, E67, and D140. Mg(2+) is bound by residues D7, E67, and D140.

Belongs to the RuvC family. As to quaternary structure, homodimer which binds Holliday junction (HJ) DNA. The HJ becomes 2-fold symmetrical on binding to RuvC with unstacked arms; it has a different conformation from HJ DNA in complex with RuvA. In the full resolvosome a probable DNA-RuvA(4)-RuvB(12)-RuvC(2) complex forms which resolves the HJ. Mg(2+) is required as a cofactor.

Its subcellular location is the cytoplasm. It catalyses the reaction Endonucleolytic cleavage at a junction such as a reciprocal single-stranded crossover between two homologous DNA duplexes (Holliday junction).. Its function is as follows. The RuvA-RuvB-RuvC complex processes Holliday junction (HJ) DNA during genetic recombination and DNA repair. Endonuclease that resolves HJ intermediates. Cleaves cruciform DNA by making single-stranded nicks across the HJ at symmetrical positions within the homologous arms, yielding a 5'-phosphate and a 3'-hydroxyl group; requires a central core of homology in the junction. The consensus cleavage sequence is 5'-(A/T)TT(C/G)-3'. Cleavage occurs on the 3'-side of the TT dinucleotide at the point of strand exchange. HJ branch migration catalyzed by RuvA-RuvB allows RuvC to scan DNA until it finds its consensus sequence, where it cleaves and resolves the cruciform DNA. This is Crossover junction endodeoxyribonuclease RuvC from Dictyoglomus thermophilum (strain ATCC 35947 / DSM 3960 / H-6-12).